Here is a 409-residue protein sequence, read N- to C-terminus: Immediate early response gene 5-like protein (409 aa).

Disordered stretches follow at residues 168–237 (QPPH…PSSS) and 312–335 (GQEE…GGTP). A compositionally biased stretch (pro residues) spans 184-195 (QPGPAPLPPPAP). Composition is skewed to low complexity over residues 196 to 212 (AALC…CSAP) and 220 to 237 (PPTV…PSSS). Positions 313–324 (QEEEDDEEEDAG) are enriched in acidic residues.

This sequence belongs to the IER family.

The protein is Immediate early response gene 5-like protein (Ier5l) of Rattus norvegicus (Rat).